A 447-amino-acid polypeptide reads, in one-letter code: Peptide-N(4)-(N-acetyl-beta-glucosaminyl)asparagine amidase (447 aa).

Residues Cys-209, Cys-212, Cys-241, and Cys-244 each coordinate Zn(2+). Cys-267 (nucleophile) is an active-site residue. Catalysis depends on residues His-294 and Asp-311.

It belongs to the transglutaminase-like superfamily. PNGase family. Zn(2+) is required as a cofactor.

The protein localises to the cytoplasm. It carries out the reaction Hydrolysis of an N(4)-(acetyl-beta-D-glucosaminyl)asparagine residue in which the glucosamine residue may be further glycosylated, to yield a (substituted) N-acetyl-beta-D-glucosaminylamine and a peptide containing an aspartate residue.. Specifically deglycosylates the denatured form of N-linked glycoproteins in the cytoplasm and assists their proteasome-mediated degradation. Cleaves the beta-aspartyl-glucosamine (GlcNAc) of the glycan and the amide side chain of Asn, converting Asn to Asp. Prefers proteins containing high-mannose over those bearing complex type oligosaccharides. Can recognize misfolded proteins in the endoplasmic reticulum that are exported to the cytosol to be destroyed and deglycosylate them, while it has no activity toward native proteins. Deglycosylation is a prerequisite for subsequent proteasome-mediated degradation of some, but not all, misfolded glycoproteins. In Oryza sativa subsp. japonica (Rice), this protein is Peptide-N(4)-(N-acetyl-beta-glucosaminyl)asparagine amidase (PNG1).